The following is a 108-amino-acid chain: Peptidyl-prolyl cis-trans isomerase Fkbp12 (108 aa).

The tract at residues M1–Q21 is disordered. The PPIase FKBP-type domain occupies G20–E108.

The protein belongs to the FKBP-type PPIase family. FKBP1 subfamily.

Its subcellular location is the cytoplasm. The catalysed reaction is [protein]-peptidylproline (omega=180) = [protein]-peptidylproline (omega=0). Functionally, PPIases accelerate the folding of proteins. It catalyzes the cis-trans isomerization of proline imidic peptide bonds in oligopeptides. Binds to ligand-free TGF beta type I receptor, from which it is released upon a ligand-induced, type II receptor mediated phosphorylation of the type I receptor. Binding is inhibitory to the signaling pathways of the TGF beta family ligands. The polypeptide is Peptidyl-prolyl cis-trans isomerase Fkbp12 (Drosophila melanogaster (Fruit fly)).